Here is a 215-residue protein sequence, read N- to C-terminus: Large ribosomal subunit protein uL3 (215 aa).

The disordered stretch occupies residues 134–166; it reads MAHGSKNHRAPGSIGAGTTPGRVFPGKRMPGRM.

It belongs to the universal ribosomal protein uL3 family. In terms of assembly, part of the 50S ribosomal subunit. Forms a cluster with proteins L14 and L19.

One of the primary rRNA binding proteins, it binds directly near the 3'-end of the 23S rRNA, where it nucleates assembly of the 50S subunit. The chain is Large ribosomal subunit protein uL3 from Gloeobacter violaceus (strain ATCC 29082 / PCC 7421).